Reading from the N-terminus, the 137-residue chain is Large ribosomal subunit protein uL16 (137 aa).

Belongs to the universal ribosomal protein uL16 family. Part of the 50S ribosomal subunit.

In terms of biological role, binds 23S rRNA and is also seen to make contacts with the A and possibly P site tRNAs. The polypeptide is Large ribosomal subunit protein uL16 (Afipia carboxidovorans (strain ATCC 49405 / DSM 1227 / KCTC 32145 / OM5) (Oligotropha carboxidovorans)).